An 816-amino-acid polypeptide reads, in one-letter code: Auxin response factor 12 (816 aa).

Over residues 1 to 10 the composition is skewed to low complexity; it reads MSSSSAASIG. Positions 1–24 are disordered; sequence MSSSSAASIGPPQPPPPPAPPEEE. Residues 11–20 are compositionally biased toward pro residues; it reads PPQPPPPPAP. The TF-B3 DNA-binding region spans 135–237; it reads FCKTLTASDT…QLLLGIRRAS (103 aa). Residues 526–565 are disordered; sequence NDQKQKIQPDQSYQVPTSAVLPSPTSLPSHLREKFGFSDP. Residues 717–801 form the PB1 domain; the sequence is RTFVKVYKSG…WYIKILSPED (85 aa).

The protein belongs to the ARF family. In terms of assembly, homodimers and heterodimers.

It is found in the nucleus. Functionally, auxin response factors (ARFs) are transcriptional factors that bind specifically to the DNA sequence 5'-TGTCTC-3' found in the auxin-responsive promoter elements (AuxREs). The sequence is that of Auxin response factor 12 (ARF12) from Oryza sativa subsp. indica (Rice).